A 318-amino-acid polypeptide reads, in one-letter code: MNELNLTVSSSPHIRAKHSTASIMQNVIIALLPALAVAGYVFGLWALALVAICVISSVATEAVIQKLLKKPITVNDWSAVVTGVLLAFNLPINAPWWIGVVGSVFAIAIVKQCFGGLGQNFINPALAARAFLLASWPGHMTSTAYIPLTDTVTTATPLALLKAGETGSMPSTLDLFTGLNGVYGCIGEISALALLIGGLYLIYKGIISWRIPTIYLLTIAIFALLVGQDPIVHMVSGGVMLGAFFMATDYASSPVTAKGQIIYAIGCGLITMIIRLYGGYPEGCSYSILLMNVATPLIERFTKERIYGVTKIKKEAKA.

3 helical membrane-spanning segments follow: residues Leu35–Ile55, Trp77–Gly99, and Phe114–Ala134. Thr156 carries the FMN phosphoryl threonine modification. 3 helical membrane-spanning segments follow: residues Val182–Ile202, Ile206–Val226, and Ile261–Pro281.

This sequence belongs to the NqrB/RnfD family. As to quaternary structure, the complex is composed of six subunits: RnfA, RnfB, RnfC, RnfD, RnfE and RnfG. FMN serves as cofactor.

It localises to the cell membrane. The enzyme catalyses 2 reduced [2Fe-2S]-[ferredoxin] + Na(+)(in) + NAD(+) + H(+) = 2 oxidized [2Fe-2S]-[ferredoxin] + Na(+)(out) + NADH. Part of a membrane-bound complex that couples electron transfer with translocation of ions across the membrane. Couples electron transfer from reduced ferredoxin to NAD(+) with electrogenic movement of Na(+) out of the cell. Involved in caffeate respiration. The chain is Na(+)-translocating ferredoxin:NAD(+) oxidoreductase complex subunit D from Acetobacterium woodii (strain ATCC 29683 / DSM 1030 / JCM 2381 / KCTC 1655 / WB1).